Here is a 616-residue protein sequence, read N- to C-terminus: Chaperone protein HscA homolog (616 aa).

Belongs to the heat shock protein 70 family.

Functionally, chaperone involved in the maturation of iron-sulfur cluster-containing proteins. Has a low intrinsic ATPase activity which is markedly stimulated by HscB. This Aliivibrio fischeri (strain MJ11) (Vibrio fischeri) protein is Chaperone protein HscA homolog.